The chain runs to 289 residues: Zinc finger matrin-type protein 3 (289 aa).

The disordered stretch occupies residues methionine 1–glutamate 42. Residues leucine 9–proline 20 show a composition bias toward pro residues. Positions alanine 24 to leucine 33 are enriched in polar residues. 2 Matrin-type zinc fingers span residues leucine 70 to asparagine 100 and aspartate 147 to leucine 177. A compositionally biased stretch (polar residues) spans alanine 180–leucine 191. Positions alanine 180 to asparagine 201 are disordered. Residues phenylalanine 246–glutamate 276 form a Matrin-type 3 zinc finger.

In terms of assembly, interacts with dsRNA. Highly expressed in adult brain, and moderately in adult kidney and testis. Not detected in fetal brain, heart, pancreas, adrenal gland, liver or small intestine.

It is found in the nucleus. The protein localises to the nucleolus. In terms of biological role, acts as a bona fide target gene of p53/TP53. May play a role in the TP53-dependent growth regulatory pathway. May contribute to TP53-mediated apoptosis by regulation of TP53 expression and translocation to the nucleus and nucleolus. This Homo sapiens (Human) protein is Zinc finger matrin-type protein 3.